The following is an 88-amino-acid chain: DNA-directed RNA polymerase subunit omega (88 aa).

Belongs to the RNA polymerase subunit omega family. In terms of assembly, the RNAP catalytic core consists of 2 alpha, 1 beta, 1 beta' and 1 omega subunit. When a sigma factor is associated with the core the holoenzyme is formed, which can initiate transcription.

It carries out the reaction RNA(n) + a ribonucleoside 5'-triphosphate = RNA(n+1) + diphosphate. Functionally, promotes RNA polymerase assembly. Latches the N- and C-terminal regions of the beta' subunit thereby facilitating its interaction with the beta and alpha subunits. The sequence is that of DNA-directed RNA polymerase subunit omega from Kineococcus radiotolerans (strain ATCC BAA-149 / DSM 14245 / SRS30216).